A 398-amino-acid chain; its full sequence is Secreted aspartic protease 2 (398 aa).

The signal sequence occupies residues 1 to 18 (MFLKNIFIALAIALLVDA). The propeptide at 19–56 (TPTTTKRSAGFVALDFSVVKTPKAFPVTNGQEGKTSKR) is activation peptide. The region spanning 70-384 (YAADITVGSN…DLDDNEISLA (315 aa)) is the Peptidase A1 domain. The active site involves Asp88. A pepstatin A-binding site is contributed by 88 to 90 (DTG). Residues Cys103 and Cys115 are joined by a disulfide bond. 141–142 (GD) provides a ligand contact to pepstatin A. The Zn(2+) site is built by Asp247 and Asp270. Residue Asp274 is part of the active site. Pepstatin A is bound at residue 274-278 (DSGTT). A disulfide bridge links Cys312 with Cys350. N-linked (GlcNAc...) asparagine glycosylation is found at Asn313 and Asn321.

This sequence belongs to the peptidase A1 family. In terms of assembly, monomer.

The protein localises to the secreted. It catalyses the reaction Preferential cleavage at the carboxyl of hydrophobic amino acids, but fails to cleave 15-Leu-|-Tyr-16, 16-Tyr-|-Leu-17 and 24-Phe-|-Phe-25 of insulin B chain. Activates trypsinogen, and degrades keratin.. Secreted aspartic peptidases (SAPs) are a group of ten acidic hydrolases considered as key virulence factors. These enzymes supply the fungus with nutrient amino acids as well as are able to degrade the selected host's proteins involved in the immune defense. Induces host inflammatory cytokine production in a proteolytic activity-independent way. Plays a role in tissue damage during superficial infection. Moreover, acts toward human hemoglobin though limited proteolysis to generate a variety of antimicrobial hemocidins, enabling to compete with the other microorganisms of the same physiological niche using the microbicidal peptides generated from the host protein. In terms of biological role, plays a key role in defense against host by cleaving histatin-5 (Hst 5), a peptide from human saliva that carries out fungicidal activity. The cleavage rate decreases in an order of SAP2 &gt; SAP9 &gt; SAP3 &gt; SAP7 &gt; SAP4 &gt; SAP1 &gt; SAP8. The first cleavage occurs between residues 'Lys-17' and 'His-18' of Hst 5, giving DSHAKRHHGYKRKFHEK and HHSHRGY peptides. Simultaneously, the DSHAKRHHGYKRK peptide is also formed. Further fragmentation by SAP2 results in FHEK and DSHAKRHHGY products. The protein is Secreted aspartic protease 2 of Candida albicans (strain SC5314 / ATCC MYA-2876) (Yeast).